The following is a 248-amino-acid chain: uncharacterized protein (248 aa).

8-32 serves as a coordination point for NADP(+); that stretch reads EVALVTGASSGIGKAIALELASAGL. Ser-134 contributes to the substrate binding site. Residue Tyr-147 is the Proton acceptor of the active site.

It belongs to the short-chain dehydrogenases/reductases (SDR) family.

This is an uncharacterized protein from Sinorhizobium fredii (strain NBRC 101917 / NGR234).